A 336-amino-acid chain; its full sequence is D-erythrose-4-phosphate dehydrogenase (336 aa).

11–12 (RI) contributes to the NAD(+) binding site. Residues 153–155 (SCT), Arg199, 212–213 (TK), and Arg235 each bind substrate. The active-site Nucleophile is Cys154. An NAD(+)-binding site is contributed by Asn317.

The protein belongs to the glyceraldehyde-3-phosphate dehydrogenase family. Epd subfamily. As to quaternary structure, homotetramer.

Its subcellular location is the cytoplasm. It catalyses the reaction D-erythrose 4-phosphate + NAD(+) + H2O = 4-phospho-D-erythronate + NADH + 2 H(+). The protein operates within cofactor biosynthesis; pyridoxine 5'-phosphate biosynthesis; pyridoxine 5'-phosphate from D-erythrose 4-phosphate: step 1/5. In terms of biological role, catalyzes the NAD-dependent conversion of D-erythrose 4-phosphate to 4-phosphoerythronate. The chain is D-erythrose-4-phosphate dehydrogenase from Aeromonas salmonicida (strain A449).